The chain runs to 470 residues: Xaa-Pro aminopeptidase 2 (470 aa).

Positions 287, 299, 382, 413, and 437 each coordinate Mn(2+).

The protein belongs to the peptidase M24B family. Homodimer. Mn(2+) serves as cofactor.

The catalysed reaction is Release of any N-terminal amino acid, including proline, that is linked to proline, even from a dipeptide or tripeptide.. The protein is Xaa-Pro aminopeptidase 2 (pepP2) of Streptomyces coelicolor (strain ATCC BAA-471 / A3(2) / M145).